We begin with the raw amino-acid sequence, 94 residues long: Acylphosphatase (94 aa).

An Acylphosphatase-like domain is found at 7 to 94; that stretch reads AALVRITGRV…EAPAGFRITR (88 aa). Catalysis depends on residues arginine 22 and asparagine 40.

This sequence belongs to the acylphosphatase family.

It carries out the reaction an acyl phosphate + H2O = a carboxylate + phosphate + H(+). The protein is Acylphosphatase (acyP) of Sinorhizobium medicae (strain WSM419) (Ensifer medicae).